A 615-amino-acid polypeptide reads, in one-letter code: UvrABC system protein C (615 aa).

In terms of domain architecture, GIY-YIG spans 14-91 (TSPGCYIHKD…IKENKPKYNI (78 aa)). In terms of domain architecture, UVR spans 196 to 231 (NKIIDELKGKMAAAAQTMEFERAAEYRDLIQAIGTL).

This sequence belongs to the UvrC family. As to quaternary structure, interacts with UvrB in an incision complex.

Its subcellular location is the cytoplasm. Functionally, the UvrABC repair system catalyzes the recognition and processing of DNA lesions. UvrC both incises the 5' and 3' sides of the lesion. The N-terminal half is responsible for the 3' incision and the C-terminal half is responsible for the 5' incision. In Streptococcus pneumoniae serotype 19F (strain G54), this protein is UvrABC system protein C.